The chain runs to 272 residues: Putative imidazole glycerol phosphate synthase subunit hisF2 (272 aa).

The active site involves Asp133.

Belongs to the HisA/HisF family. As to quaternary structure, heterodimer of HisH and HisF.

Its subcellular location is the cytoplasm. The enzyme catalyses 5-[(5-phospho-1-deoxy-D-ribulos-1-ylimino)methylamino]-1-(5-phospho-beta-D-ribosyl)imidazole-4-carboxamide + L-glutamine = D-erythro-1-(imidazol-4-yl)glycerol 3-phosphate + 5-amino-1-(5-phospho-beta-D-ribosyl)imidazole-4-carboxamide + L-glutamate + H(+). Its pathway is amino-acid biosynthesis; L-histidine biosynthesis; L-histidine from 5-phospho-alpha-D-ribose 1-diphosphate: step 5/9. IGPS catalyzes the conversion of PRFAR and glutamine to IGP, AICAR and glutamate. The HisF subunit catalyzes the cyclization activity that produces IGP and AICAR from PRFAR using the ammonia provided by the HisH subunit. The polypeptide is Putative imidazole glycerol phosphate synthase subunit hisF2 (hisF2) (Vibrio vulnificus (strain YJ016)).